The following is an 899-amino-acid chain: Toll-like receptor 4 (899 aa).

The signal sequence occupies residues 1–46 (MCPLQIHVLHLIQGNQKNRKGKYVNMTRQLWYILPLLFLLCHCVTS). N-linked (GlcNAc...) asparagine glycans are attached at residues Asn-25, Asn-75, Asn-83, and Asn-93. Residues 47–702 (ERRCYFSKIS…LERNCRSYTA (656 aa)) are Extracellular-facing. LRR repeat units follow at residues 83 to 103 (NESV…PDLP), 104 to 126 (RSLL…AFAR), 128 to 150 (QNLT…LTAG), 155 to 179 (LTRL…VLSD), 181 to 202 (VSLN…MRKI), 203 to 229 (HALK…YFQN), and 230 to 253 (VHGI…TFSY). N-linked (GlcNAc...) asparagine glycosylation is found at Asn-129, Asn-137, Asn-146, and Asn-168. Residues Asn-237, Asn-256, Asn-275, and Asn-313 are each glycosylated (N-linked (GlcNAc...) asparagine). LRR repeat units follow at residues 257 to 282 (LTHL…DLKN), 313 to 336 (NTSL…VLMY), 338 to 360 (PKTL…ALET), and 363 to 386 (LVNL…IFSN). N-linked (GlcNAc...) asparagine glycosylation is found at Asn-388, Asn-432, and Asn-463. LRR repeat units lie at residues 468-493 (HYPL…VFYD), 501-524 (LEGL…FFDY), 526-549 (TGLK…EKGE), 554-577 (LLKL…ILRN), 579-601 (ISLE…LKHI), 602-624 (KGLR…VMRE), and 631-654 (SSNL…HFLR). Asn-516 carries N-linked (GlcNAc...) asparagine glycosylation. 3 N-linked (GlcNAc...) asparagine glycosylation sites follow: Asn-633, Asn-637, and Asn-668. Residues 703–723 (VIVLFSCVFVILLTVIVCGVV) form a helical membrane-spanning segment. Topologically, residues 724–899 (YRYRWKLRYL…WRKLRDPISM (176 aa)) are cytoplasmic. Residues 756–897 (YEFDAFISYA…IFWRKLRDPI (142 aa)) form the TIR domain.

Belongs to the Toll-like receptor family. Expressed in all tissues tested. The highest expression is in the hepatopancreas, with moderate expression in the gills, and low expression in the gonads, adductor muscle, hemocytes, and mantle.

It is found in the cell membrane. Its function is as follows. May be involved in the innate immune response. In Pinctada imbricata (Atlantic pearl-oyster), this protein is Toll-like receptor 4.